A 162-amino-acid chain; its full sequence is Probable chemoreceptor glutamine deamidase CheD (162 aa).

The protein belongs to the CheD family.

It carries out the reaction L-glutaminyl-[protein] + H2O = L-glutamyl-[protein] + NH4(+). Its function is as follows. Probably deamidates glutamine residues to glutamate on methyl-accepting chemotaxis receptors (MCPs), playing an important role in chemotaxis. This chain is Probable chemoreceptor glutamine deamidase CheD, found in Caldanaerobacter subterraneus subsp. tengcongensis (strain DSM 15242 / JCM 11007 / NBRC 100824 / MB4) (Thermoanaerobacter tengcongensis).